Consider the following 346-residue polypeptide: tRNA pseudouridine synthase D (346 aa).

Catalysis depends on Asp83, which acts as the Nucleophile. The 147-residue stretch at Gly159–Val305 folds into the TRUD domain.

It belongs to the pseudouridine synthase TruD family.

The enzyme catalyses uridine(13) in tRNA = pseudouridine(13) in tRNA. In terms of biological role, responsible for synthesis of pseudouridine from uracil-13 in transfer RNAs. The polypeptide is tRNA pseudouridine synthase D (Hydrogenovibrio crunogenus (strain DSM 25203 / XCL-2) (Thiomicrospira crunogena)).